The following is a 494-amino-acid chain: BTB/POZ domain and ankyrin repeat-containing protein NH5.2 (494 aa).

The BTB domain maps to 25-131; that stretch reads SDVAFSVEGR…LYSGQASVAA (107 aa). The tract at residues 60 to 95 is disordered; it reads NHQPPPPPPPPLNWPTAGGGGGGSGGGGRGGAGGGG. Residues 61–72 show a composition bias toward pro residues; sequence HQPPPPPPPPLN. The span at 76–95 shows a compositional bias: gly residues; it reads AGGGGGGSGGGGRGGAGGGG. The C2HC NPR-type zinc finger occupies 137-151; that stretch reads LPGCGARGCWHTRCG. C140, C145, H147, and C150 together coordinate Zn(2+). ANK repeat units follow at residues 275-303, 304-334, 339-368, and 372-406; these read NKIRRMRRALDAADIELVKLMVMGEGLDL, DDALAVHYAVQHCNRDVVKALLELGAADVNS, TGKTALHLAAEMVSPDMVSVLLDHHADPNS, and DGVTPLDVLRSLTSEFLFKGAVPGLTHIEPNKLRL. Disordered regions lie at residues 421 to 443 and 471 to 494; these read DDGAPVTGGEAGGSDGGNFPRSD and GEGRKSNNGRGSPPPAMYFPNGFA.

The protein belongs to the plant 'ANKYRIN-BTB/POZ' family. 'NOOT-BOP-COCH-like' (NBCL) subfamily. As to quaternary structure, homodimer. Interacts with TGAL5, TGAL7, TGAL8 and TGAL9.

The protein resides in the nucleus. The protein localises to the cytoplasm. It functions in the pathway protein modification; protein ubiquitination. Functionally, may act as a substrate-specific adapter of an E3 ubiquitin-protein ligase complex (CUL3-RBX1-BTB) which mediates the ubiquitination and subsequent proteasomal degradation of target proteins. Transcriptional co-regulator involved in the promotion of leaf and floral meristem fate and determinacy. Required for the abscission of senescent organs, probably by regulating the cell wall disorganization in abscission zones (AZs, e.g. pulvini at the base of leaves). This chain is BTB/POZ domain and ankyrin repeat-containing protein NH5.2, found in Oryza sativa subsp. japonica (Rice).